Here is a 227-residue protein sequence, read N- to C-terminus: Cytochrome c oxidase subunit 2 (227 aa).

The Mitochondrial intermembrane segment spans residues methionine 1–serine 14. A helical transmembrane segment spans residues proline 15 to methionine 45. Residues leucine 46 to glutamine 59 are Mitochondrial matrix-facing. A helical transmembrane segment spans residues glutamate 60 to methionine 87. Over aspartate 88–leucine 227 the chain is Mitochondrial intermembrane. Cu cation-binding residues include histidine 161, cysteine 196, glutamate 198, cysteine 200, histidine 204, and methionine 207. Residue glutamate 198 coordinates Mg(2+).

It belongs to the cytochrome c oxidase subunit 2 family. As to quaternary structure, component of the cytochrome c oxidase (complex IV, CIV), a multisubunit enzyme composed of 14 subunits. The complex is composed of a catalytic core of 3 subunits MT-CO1, MT-CO2 and MT-CO3, encoded in the mitochondrial DNA, and 11 supernumerary subunits COX4I, COX5A, COX5B, COX6A, COX6B, COX6C, COX7A, COX7B, COX7C, COX8 and NDUFA4, which are encoded in the nuclear genome. The complex exists as a monomer or a dimer and forms supercomplexes (SCs) in the inner mitochondrial membrane with NADH-ubiquinone oxidoreductase (complex I, CI) and ubiquinol-cytochrome c oxidoreductase (cytochrome b-c1 complex, complex III, CIII), resulting in different assemblies (supercomplex SCI(1)III(2)IV(1) and megacomplex MCI(2)III(2)IV(2)). Found in a complex with TMEM177, COA6, COX18, COX20, SCO1 and SCO2. Interacts with TMEM177 in a COX20-dependent manner. Interacts with COX20. Interacts with COX16. Cu cation serves as cofactor.

It is found in the mitochondrion inner membrane. It catalyses the reaction 4 Fe(II)-[cytochrome c] + O2 + 8 H(+)(in) = 4 Fe(III)-[cytochrome c] + 2 H2O + 4 H(+)(out). In terms of biological role, component of the cytochrome c oxidase, the last enzyme in the mitochondrial electron transport chain which drives oxidative phosphorylation. The respiratory chain contains 3 multisubunit complexes succinate dehydrogenase (complex II, CII), ubiquinol-cytochrome c oxidoreductase (cytochrome b-c1 complex, complex III, CIII) and cytochrome c oxidase (complex IV, CIV), that cooperate to transfer electrons derived from NADH and succinate to molecular oxygen, creating an electrochemical gradient over the inner membrane that drives transmembrane transport and the ATP synthase. Cytochrome c oxidase is the component of the respiratory chain that catalyzes the reduction of oxygen to water. Electrons originating from reduced cytochrome c in the intermembrane space (IMS) are transferred via the dinuclear copper A center (CU(A)) of subunit 2 and heme A of subunit 1 to the active site in subunit 1, a binuclear center (BNC) formed by heme A3 and copper B (CU(B)). The BNC reduces molecular oxygen to 2 water molecules using 4 electrons from cytochrome c in the IMS and 4 protons from the mitochondrial matrix. This Cheirogaleus medius (Fat-tailed dwarf lemur) protein is Cytochrome c oxidase subunit 2 (MT-CO2).